Here is a 137-residue protein sequence, read N- to C-terminus: Hydrogenase maturation factor HypA (137 aa).

His2 contacts Ni(2+). Cys73, Cys75, Cys105, and Cys108 together coordinate Zn(2+).

This sequence belongs to the HypA/HybF family.

In terms of biological role, involved in the maturation of [NiFe] hydrogenases. Required for nickel insertion into the metal center of the hydrogenase. The polypeptide is Hydrogenase maturation factor HypA (Methanosarcina mazei (strain ATCC BAA-159 / DSM 3647 / Goe1 / Go1 / JCM 11833 / OCM 88) (Methanosarcina frisia)).